Here is a 363-residue protein sequence, read N- to C-terminus: 3-isopropylmalate dehydrogenase (363 aa).

78 to 91 (GPKWEHLPPDQQPE) serves as a coordination point for NAD(+). Substrate is bound by residues R99, R109, R138, and D227. Residues D227, D251, and D255 each contribute to the Mg(2+) site. 285 to 297 (GSAPDIAGKNIAN) is a binding site for NAD(+).

The protein belongs to the isocitrate and isopropylmalate dehydrogenases family. LeuB type 1 subfamily. In terms of assembly, homodimer. It depends on Mg(2+) as a cofactor. Mn(2+) serves as cofactor.

It localises to the cytoplasm. The catalysed reaction is (2R,3S)-3-isopropylmalate + NAD(+) = 4-methyl-2-oxopentanoate + CO2 + NADH. Its pathway is amino-acid biosynthesis; L-leucine biosynthesis; L-leucine from 3-methyl-2-oxobutanoate: step 3/4. In terms of biological role, catalyzes the oxidation of 3-carboxy-2-hydroxy-4-methylpentanoate (3-isopropylmalate) to 3-carboxy-4-methyl-2-oxopentanoate. The product decarboxylates to 4-methyl-2 oxopentanoate. The chain is 3-isopropylmalate dehydrogenase from Escherichia coli O157:H7.